The primary structure comprises 232 residues: Orotidine 5'-phosphate decarboxylase (232 aa).

Residues aspartate 12, lysine 34, aspartate 61–threonine 70, threonine 116, arginine 177, glutamine 186, glycine 206, and arginine 207 contribute to the substrate site. Lysine 63 (proton donor) is an active-site residue.

It belongs to the OMP decarboxylase family. Type 1 subfamily. As to quaternary structure, homodimer.

The catalysed reaction is orotidine 5'-phosphate + H(+) = UMP + CO2. It participates in pyrimidine metabolism; UMP biosynthesis via de novo pathway; UMP from orotate: step 2/2. In terms of biological role, catalyzes the decarboxylation of orotidine 5'-monophosphate (OMP) to uridine 5'-monophosphate (UMP). The polypeptide is Orotidine 5'-phosphate decarboxylase (Sinorhizobium medicae (strain WSM419) (Ensifer medicae)).